Here is a 1004-residue protein sequence, read N- to C-terminus: ABC transporter G family member 25 (1004 aa).

A signal peptide spans 1–27 (MAASQLLAAAVAAAVFLAALLVPPARC). The chain crosses the membrane as a helical span at residues 271–291 (ATALFGGILIVILSVVLLLVY). A disordered region spans residues 343 to 373 (SDQLAASSNEARHATEGNGKRSKNRKKLAHA). Basic and acidic residues predominate over residues 352–361 (EARHATEGNG). Over residues 362 to 372 (KRSKNRKKLAH) the composition is skewed to basic residues. The region spanning 419 to 659 (VVFKGLTLSI…FSSLGIKVPE (241 aa)) is the ABC transporter domain. 451–458 (GPSGAGKT) contributes to the ATP binding site. Transmembrane regions (helical) follow at residues 776-796 (ATLQAVDYLILCIAGICIGTI), 804-824 (FGVASYGYTIIAVSLLCQLAA), 886-906 (LVFLALVYCVTGIGYTFAIWF), 907-927 (ELGLAQLCSALIPVVLVLVGT), 943-963 (WALEALIIAGAKKYSGVWLIT), and 978-998 (FVLCIVIVMLMGVLFRFIALL).

Belongs to the ABC transporter superfamily. ABCG family. Eye pigment precursor importer (TC 3.A.1.204) subfamily.

It localises to the membrane. This is ABC transporter G family member 25 from Oryza sativa subsp. japonica (Rice).